The sequence spans 515 residues: Maturase K (515 aa).

Belongs to the intron maturase 2 family. MatK subfamily.

Its subcellular location is the plastid. It is found in the chloroplast. Usually encoded in the trnK tRNA gene intron. Probably assists in splicing its own and other chloroplast group II introns. In Pinus clausa (Sand pine), this protein is Maturase K.